Reading from the N-terminus, the 125-residue chain is Glutamyl-tRNA(Gln) amidotransferase subunit C, mitochondrial (125 aa).

Belongs to the GatC family. As to quaternary structure, subunit of the heterotrimeric GatCAB amidotransferase (AdT) complex, composed of A, B and C subunits.

It localises to the mitochondrion. The catalysed reaction is L-glutamyl-tRNA(Gln) + L-glutamine + ATP + H2O = L-glutaminyl-tRNA(Gln) + L-glutamate + ADP + phosphate + H(+). Allows the formation of correctly charged Gln-tRNA(Gln) through the transamidation of misacylated Glu-tRNA(Gln) in the mitochondria. The reaction takes place in the presence of glutamine and ATP through an activated gamma-phospho-Glu-tRNA(Gln). The protein is Glutamyl-tRNA(Gln) amidotransferase subunit C, mitochondrial of Drosophila mojavensis (Fruit fly).